A 199-amino-acid chain; its full sequence is Elongation factor Ts (199 aa).

Residues 81-84 form an involved in Mg(2+) ion dislocation from EF-Tu region; the sequence is TDFV.

This sequence belongs to the EF-Ts family.

It localises to the cytoplasm. Functionally, associates with the EF-Tu.GDP complex and induces the exchange of GDP to GTP. It remains bound to the aminoacyl-tRNA.EF-Tu.GTP complex up to the GTP hydrolysis stage on the ribosome. In Thermotoga petrophila (strain ATCC BAA-488 / DSM 13995 / JCM 10881 / RKU-1), this protein is Elongation factor Ts.